The sequence spans 207 residues: Small ribosomal subunit protein uS4c (207 aa).

An S4 RNA-binding domain is found at 92–156 (MRLDNILFRL…YQSIITKRIE (65 aa)).

The protein belongs to the universal ribosomal protein uS4 family. In terms of assembly, part of the 30S ribosomal subunit. Contacts protein S5. The interaction surface between S4 and S5 is involved in control of translational fidelity.

The protein localises to the plastid. Its subcellular location is the chloroplast. In terms of biological role, one of the primary rRNA binding proteins, it binds directly to 16S rRNA where it nucleates assembly of the body of the 30S subunit. With S5 and S12 plays an important role in translational accuracy. This Equisetum arvense (Field horsetail) protein is Small ribosomal subunit protein uS4c (rps4).